The sequence spans 366 residues: Histidinol-phosphate aminotransferase 2 (366 aa).

Residue Lys226 is modified to N6-(pyridoxal phosphate)lysine.

The protein belongs to the class-II pyridoxal-phosphate-dependent aminotransferase family. Histidinol-phosphate aminotransferase subfamily. In terms of assembly, homodimer. Requires pyridoxal 5'-phosphate as cofactor.

The enzyme catalyses L-histidinol phosphate + 2-oxoglutarate = 3-(imidazol-4-yl)-2-oxopropyl phosphate + L-glutamate. The protein operates within amino-acid biosynthesis; L-histidine biosynthesis; L-histidine from 5-phospho-alpha-D-ribose 1-diphosphate: step 7/9. The sequence is that of Histidinol-phosphate aminotransferase 2 from Cupriavidus pinatubonensis (strain JMP 134 / LMG 1197) (Cupriavidus necator (strain JMP 134)).